Consider the following 138-residue polypeptide: MGGAFSTSKPKPAAGEEGGESAVVAVHSKAKWDELWDAHKNTTKLVVIDFSASWCGPCKMMEPVFKEMAGRFTDVAFLKVDVDELAEVARTWRVEAMPTFVLARGGEEVGRIVGADKDELEKTINTLRSSSSSTATTT.

The segment at 1-20 (MGGAFSTSKPKPAAGEEGGE) is disordered. Residues 12 to 129 (PAAGEEGGES…LEKTINTLRS (118 aa)) enclose the Thioredoxin domain. Residues C55 and C58 each act as nucleophile in the active site. C55 and C58 are oxidised to a cystine.

It belongs to the thioredoxin family. Plant H-type subfamily.

The protein localises to the cytoplasm. Probable thiol-disulfide oxidoreductase that may be involved in the redox regulation of a number of cytosolic enzymes. The chain is Thioredoxin H2-1 from Oryza sativa subsp. japonica (Rice).